The following is a 181-amino-acid chain: Adenylyl-sulfate kinase (181 aa).

Gly-12–Thr-19 is an ATP binding site. Ser-86 (phosphoserine intermediate) is an active-site residue.

This sequence belongs to the APS kinase family.

It catalyses the reaction adenosine 5'-phosphosulfate + ATP = 3'-phosphoadenylyl sulfate + ADP + H(+). The protein operates within sulfur metabolism; hydrogen sulfide biosynthesis; sulfite from sulfate: step 2/3. Catalyzes the synthesis of activated sulfate. The sequence is that of Adenylyl-sulfate kinase from Rippkaea orientalis (strain PCC 8801 / RF-1) (Cyanothece sp. (strain PCC 8801)).